The following is a 365-amino-acid chain: Protein YIM1 (365 aa).

The protein belongs to the YIM1 family.

The protein localises to the lipid droplet. The protein resides in the mitochondrion. The polypeptide is Protein YIM1 (YIM1) (Saccharomyces cerevisiae (strain ATCC 204508 / S288c) (Baker's yeast)).